Consider the following 82-residue polypeptide: Large ribosomal subunit protein bL31B (82 aa).

It belongs to the bacterial ribosomal protein bL31 family. Type B subfamily. In terms of assembly, part of the 50S ribosomal subunit.

The protein is Large ribosomal subunit protein bL31B of Acinetobacter baylyi (strain ATCC 33305 / BD413 / ADP1).